A 207-amino-acid polypeptide reads, in one-letter code: Metalloproteinase inhibitor 1 (207 aa).

The signal sequence occupies residues 1–23 (MAPLAALASSMLLLLWLVAPSRA). Zn(2+) is bound at residue C24. The interval 24–27 (CTCV) is involved in metalloproteinase-binding. 6 cysteine pairs are disulfide-bonded: C24–C93, C26–C122, C36–C147, C150–C197, C155–C160, and C168–C189. The region spanning 24–147 (CTCVPPHPQT…GFTKTYAAGC (124 aa)) is the NTR domain. N53 carries an N-linked (GlcNAc...) asparagine glycan. The involved in metalloproteinase-binding stretch occupies residues 90–91 (ES). N-linked (GlcNAc...) asparagine glycosylation is present at N101. A Phosphoserine modification is found at S178.

Belongs to the protease inhibitor I35 (TIMP) family. Interacts with MMP1, MMP3, MMP10 and MMP13, but has only very low affinity for MMP14. Interacts with CD63; identified in a complex with CD63 and ITGB1. Post-translationally, the activity of TIMP1 is dependent on the presence of disulfide bonds. N-glycosylated.

It is found in the secreted. Metalloproteinase inhibitor that functions by forming one to one complexes with target metalloproteinases, such as collagenases, and irreversibly inactivates them by binding to their catalytic zinc cofactor. Acts on MMP1, MMP2, MMP3, MMP7, MMP8, MMP9, MMP10, MMP11, MMP12, MMP13 and MMP16. Does not act on MMP14. Also functions as a growth factor that regulates cell differentiation, migration and cell death and activates cellular signaling cascades via CD63 and ITGB1. Plays a role in integrin signaling. This Oryctolagus cuniculus (Rabbit) protein is Metalloproteinase inhibitor 1 (TIMP1).